A 174-amino-acid chain; its full sequence is Transcription antitermination protein NusB (174 aa).

The tract at residues 1–28 is disordered; the sequence is MVEPKKPFMRKPPPKTGDKKPGDRKANR. The span at 16 to 25 shows a compositional bias: basic and acidic residues; it reads TGDKKPGDRK.

It belongs to the NusB family.

Functionally, involved in transcription antitermination. Required for transcription of ribosomal RNA (rRNA) genes. Binds specifically to the boxA antiterminator sequence of the ribosomal RNA (rrn) operons. In Rhodopseudomonas palustris (strain BisB5), this protein is Transcription antitermination protein NusB.